Here is a 228-residue protein sequence, read N- to C-terminus: Cytidylate kinase (228 aa).

12–20 contacts ATP; the sequence is GPSGAGKGT.

This sequence belongs to the cytidylate kinase family. Type 1 subfamily.

It localises to the cytoplasm. The catalysed reaction is CMP + ATP = CDP + ADP. The enzyme catalyses dCMP + ATP = dCDP + ADP. This chain is Cytidylate kinase, found in Photobacterium profundum (strain SS9).